Here is a 114-residue protein sequence, read N- to C-terminus: Large ribosomal subunit protein uL22 (114 aa).

Belongs to the universal ribosomal protein uL22 family. In terms of assembly, part of the 50S ribosomal subunit.

Its function is as follows. This protein binds specifically to 23S rRNA; its binding is stimulated by other ribosomal proteins, e.g. L4, L17, and L20. It is important during the early stages of 50S assembly. It makes multiple contacts with different domains of the 23S rRNA in the assembled 50S subunit and ribosome. The globular domain of the protein is located near the polypeptide exit tunnel on the outside of the subunit, while an extended beta-hairpin is found that lines the wall of the exit tunnel in the center of the 70S ribosome. In Streptococcus suis (strain 98HAH33), this protein is Large ribosomal subunit protein uL22.